Here is a 137-residue protein sequence, read N- to C-terminus: Large ribosomal subunit protein uL16 (137 aa).

The protein belongs to the universal ribosomal protein uL16 family. As to quaternary structure, part of the 50S ribosomal subunit.

In terms of biological role, binds 23S rRNA and is also seen to make contacts with the A and possibly P site tRNAs. The polypeptide is Large ribosomal subunit protein uL16 (Marinomonas sp. (strain MWYL1)).